Here is a 485-residue protein sequence, read N- to C-terminus: Glutamyl-tRNA(Gln) amidotransferase subunit A (485 aa).

Active-site charge relay system residues include lysine 79 and serine 154. The Acyl-ester intermediate role is filled by serine 178.

The protein belongs to the amidase family. GatA subfamily. Heterotrimer of A, B and C subunits.

The enzyme catalyses L-glutamyl-tRNA(Gln) + L-glutamine + ATP + H2O = L-glutaminyl-tRNA(Gln) + L-glutamate + ADP + phosphate + H(+). In terms of biological role, allows the formation of correctly charged Gln-tRNA(Gln) through the transamidation of misacylated Glu-tRNA(Gln) in organisms which lack glutaminyl-tRNA synthetase. The reaction takes place in the presence of glutamine and ATP through an activated gamma-phospho-Glu-tRNA(Gln). This chain is Glutamyl-tRNA(Gln) amidotransferase subunit A, found in Bacillus licheniformis (strain ATCC 14580 / DSM 13 / JCM 2505 / CCUG 7422 / NBRC 12200 / NCIMB 9375 / NCTC 10341 / NRRL NRS-1264 / Gibson 46).